Reading from the N-terminus, the 309-residue chain is Serine/threonine-protein phosphatase 2A catalytic subunit alpha isoform (309 aa).

4 residues coordinate Mn(2+): Asp-57, His-59, Asp-85, and Asn-117. Asp-57, His-59, and Asp-85 together coordinate Zn(2+). Asp-85 and Asn-117 together coordinate Fe(3+). Catalysis depends on His-118, which acts as the Proton donor. Mn(2+) contacts are provided by His-167 and His-241. Residues His-167 and His-241 each contribute to the Fe(3+) site. Tyr-307 is modified (phosphotyrosine). Leu-309 carries the leucine methyl ester modification.

This sequence belongs to the PPP phosphatase family. PP-1 subfamily. As to quaternary structure, PP2A consists of a common heterodimeric core enzyme, composed of PPP2CA, a 36 kDa catalytic subunit (subunit C), and PPP2R1A, a 65 kDa constant regulatory subunit (PR65 or subunit A), that associates with a variety of regulatory subunits. Proteins that associate with the core dimer include three families of regulatory subunits B (the R2/B/PR55/B55, R3/B''/PR72/PR130/PR59 and R5/B'/B56 families), the 48 kDa variable regulatory subunit, viral proteins, and cell signaling molecules. May indirectly interact with SGOL1, most probably through regulatory B56 subunits. Phosphatase component of the Integrator-PP2A (INTAC) complex, composed of the Integrator core complex and protein phosphatase 2A subunits PPP2CA and PPP2R1A. It depends on Mn(2+) as a cofactor. Requires Fe(3+) as cofactor. The cofactor is Zn(2+). Reversibly methyl esterified on Leu-309 by leucine carboxyl methyltransferase 1 (LCMT1) and protein phosphatase methylesterase 1 (PPME1). Carboxyl methylation influences the affinity of the catalytic subunit for the different regulatory subunits, thereby modulating the PP2A holoenzyme's substrate specificity, enzyme activity and cellular localization. In terms of processing, phosphorylation of either threonine (by autophosphorylation-activated protein kinase) or tyrosine results in inactivation of the phosphatase. Auto-dephosphorylation has been suggested as a mechanism for reactivation.

The protein localises to the cytoplasm. The protein resides in the nucleus. It is found in the chromosome. Its subcellular location is the centromere. It localises to the cytoskeleton. The protein localises to the spindle pole. The catalysed reaction is O-phospho-L-seryl-[protein] + H2O = L-seryl-[protein] + phosphate. It catalyses the reaction O-phospho-L-threonyl-[protein] + H2O = L-threonyl-[protein] + phosphate. With respect to regulation, inhibited by the interaction between PPP2R2A and ARPP19; this inhibition is enhanced when ARPP19 is phosphorylated. Inhibited by the interaction between PPP2R2A and PABIR1/FAM122A. Its function is as follows. PP2A is the major phosphatase for microtubule-associated proteins (MAPs). PP2A can modulate the activity of phosphorylase B kinase casein kinase 2, mitogen-stimulated S6 kinase, and MAP-2 kinase. Key mediator of a quality checkpoint during transcription elongation as part of the Integrator-PP2A (INTAC) complex. The INTAC complex drives premature transcription termination of transcripts that are unfavorably configured for transcriptional elongation: within the INTAC complex, PPP2CA catalyzes dephosphorylation of the C-terminal domain (CTD) of Pol II subunit POLR2A/RPB1 and SUPT5H/SPT5, thereby preventing transcriptional elongation. The sequence is that of Serine/threonine-protein phosphatase 2A catalytic subunit alpha isoform (PPP2CA) from Gallus gallus (Chicken).